Here is a 415-residue protein sequence, read N- to C-terminus: Peptide chain release factor subunit 1 (415 aa).

The protein belongs to the eukaryotic release factor 1 family. As to quaternary structure, heterodimer of two subunits, one of which binds GTP.

Its subcellular location is the cytoplasm. Directs the termination of nascent peptide synthesis (translation) in response to the termination codons UAA, UAG and UGA. This chain is Peptide chain release factor subunit 1, found in Thermococcus kodakarensis (strain ATCC BAA-918 / JCM 12380 / KOD1) (Pyrococcus kodakaraensis (strain KOD1)).